A 507-amino-acid polypeptide reads, in one-letter code: ATP synthase subunit alpha, chloroplastic (507 aa).

Glycine 170 to threonine 177 serves as a coordination point for ATP.

This sequence belongs to the ATPase alpha/beta chains family. In terms of assembly, F-type ATPases have 2 components, CF(1) - the catalytic core - and CF(0) - the membrane proton channel. CF(1) has five subunits: alpha(3), beta(3), gamma(1), delta(1), epsilon(1). CF(0) has four main subunits: a, b, b' and c.

It is found in the plastid. It localises to the chloroplast thylakoid membrane. It carries out the reaction ATP + H2O + 4 H(+)(in) = ADP + phosphate + 5 H(+)(out). In terms of biological role, produces ATP from ADP in the presence of a proton gradient across the membrane. The alpha chain is a regulatory subunit. The chain is ATP synthase subunit alpha, chloroplastic from Acorus calamus var. americanus (American sweet flag).